The following is a 203-amino-acid chain: A-type ATP synthase subunit E (203 aa).

This sequence belongs to the V-ATPase E subunit family. Has multiple subunits with at least A(3), B(3), C, D, E, F, H, I and proteolipid K(x).

The protein resides in the cell membrane. Component of the A-type ATP synthase that produces ATP from ADP in the presence of a proton gradient across the membrane. The protein is A-type ATP synthase subunit E of Methanococcus vannielii (strain ATCC 35089 / DSM 1224 / JCM 13029 / OCM 148 / SB).